The chain runs to 87 residues: DNA/RNA-binding protein Alba (87 aa).

K9 is subject to N6-acetyllysine.

The protein belongs to the histone-like Alba family. Post-translationally, acetylated. Acetylation at Lys-9 decreases DNA-binding affinity.

It localises to the cytoplasm. The protein localises to the chromosome. Its function is as follows. Binds double-stranded DNA tightly but without sequence specificity. Involved in DNA compaction. This is DNA/RNA-binding protein Alba from Methanocaldococcus jannaschii (strain ATCC 43067 / DSM 2661 / JAL-1 / JCM 10045 / NBRC 100440) (Methanococcus jannaschii).